The primary structure comprises 100 residues: Succinate dehydrogenase subunit 7B, mitochondrial (100 aa).

Residues 1–25 (MAFLLNNASISSHLRSSSSQKTGDA) are disordered. Residues 1–32 (MAFLLNNASISSHLRSSSSQKTGDALSISRRG) constitute a mitochondrion transit peptide. The segment covering 9–19 (SISSHLRSSSS) has biased composition (low complexity).

Component of complex II composed of eight subunits in plants: four classical SDH subunits SDH1, SDH2, SDH3 and SDH4 (a flavoprotein (FP), an iron-sulfur protein (IP), and a cytochrome b composed of a large and a small subunit.), as well as four subunits unknown in mitochondria from bacteria and heterotrophic eukaryotes.

The protein localises to the mitochondrion inner membrane. It participates in carbohydrate metabolism; tricarboxylic acid cycle. This is Succinate dehydrogenase subunit 7B, mitochondrial from Arabidopsis thaliana (Mouse-ear cress).